The following is a 403-amino-acid chain: Creatinase (403 aa).

The active site involves H232.

The protein belongs to the peptidase M24 family. Creatinase subfamily. As to quaternary structure, homodimer.

It catalyses the reaction creatine + H2O = sarcosine + urea. This Flavobacterium sp. (strain U-188) protein is Creatinase.